A 298-amino-acid chain; its full sequence is NADH-cytochrome b5 reductase 2 (298 aa).

A helical membrane pass occupies residues 13–33 (FLPFAIGAVAVTAGALYLNGW). Residues 48–152 (RKWIDLELEK…QGPIPKWQWK (105 aa)) form the FAD-binding FR-type domain. 155–190 (SFDTITLLGGGTGITPLYQLVHHITQNKEDKTKINL) is an FAD binding site.

The protein belongs to the flavoprotein pyridine nucleotide cytochrome reductase family. Requires FAD as cofactor.

It localises to the mitochondrion outer membrane. It carries out the reaction 2 Fe(III)-[cytochrome b5] + NADH = 2 Fe(II)-[cytochrome b5] + NAD(+) + H(+). May mediate the reduction of outer membrane cytochrome b5. This chain is NADH-cytochrome b5 reductase 2 (MCR1), found in Candida glabrata (strain ATCC 2001 / BCRC 20586 / JCM 3761 / NBRC 0622 / NRRL Y-65 / CBS 138) (Yeast).